The following is a 229-amino-acid chain: MTNFQDKPNIRIMFDSLAPTYDKINKILSLGLHLTWNHSFVSLLGRSDHLLDLCAGTGHVALSYIQKYPQASATLVDFSTKMLENVQECHPLAPFSYVISDVTSMPLPNDTFHLASMAYGLRNLSSPLEALKEVHRVLKPKGRLGILELTRPATYNPVHLLHKLYLNLVVPSVGRFYSGNSYAYSYLKESIRNLPCDTSLERVFHKSGLHIIRKRKLLFGTATIWILEK.

Residues T57, D77, and 101–102 (DV) contribute to the S-adenosyl-L-methionine site.

The protein belongs to the class I-like SAM-binding methyltransferase superfamily. MenG/UbiE family.

It catalyses the reaction a 2-demethylmenaquinol + S-adenosyl-L-methionine = a menaquinol + S-adenosyl-L-homocysteine + H(+). Its pathway is quinol/quinone metabolism; menaquinone biosynthesis; menaquinol from 1,4-dihydroxy-2-naphthoate: step 2/2. In terms of biological role, methyltransferase required for the conversion of demethylmenaquinol (DMKH2) to menaquinol (MKH2). In Chlamydia muridarum (strain MoPn / Nigg), this protein is Demethylmenaquinone methyltransferase.